Consider the following 285-residue polypeptide: Nucleotide-binding protein Psyr_4150 (285 aa).

8 to 15 (GRSGSGKS) is an ATP binding site. A GTP-binding site is contributed by 60–63 (DARN).

This sequence belongs to the RapZ-like family.

Its function is as follows. Displays ATPase and GTPase activities. In Pseudomonas syringae pv. syringae (strain B728a), this protein is Nucleotide-binding protein Psyr_4150.